Reading from the N-terminus, the 272-residue chain is Indole-3-glycerol phosphate synthase (272 aa).

Belongs to the TrpC family.

The catalysed reaction is 1-(2-carboxyphenylamino)-1-deoxy-D-ribulose 5-phosphate + H(+) = (1S,2R)-1-C-(indol-3-yl)glycerol 3-phosphate + CO2 + H2O. It participates in amino-acid biosynthesis; L-tryptophan biosynthesis; L-tryptophan from chorismate: step 4/5. This is Indole-3-glycerol phosphate synthase from Mycolicibacterium smegmatis (strain ATCC 700084 / mc(2)155) (Mycobacterium smegmatis).